The following is a 508-amino-acid chain: Photosystem II CP47 reaction center protein (508 aa).

6 helical membrane-spanning segments follow: residues 21–36 (SVHL…WAGS), 101–115 (IILS…IWHW), 140–156 (GVHL…FGVF), 203–218 (IAAG…FHVL), 237–252 (VLSS…AFVV), and 457–472 (SFAL…HGAR).

Belongs to the PsbB/PsbC family. PsbB subfamily. PSII is composed of 1 copy each of membrane proteins PsbA, PsbB, PsbC, PsbD, PsbE, PsbF, PsbH, PsbI, PsbJ, PsbK, PsbL, PsbM, PsbT, PsbY, PsbZ, Psb30/Ycf12, at least 3 peripheral proteins of the oxygen-evolving complex and a large number of cofactors. It forms dimeric complexes. The cofactor is Binds multiple chlorophylls. PSII binds additional chlorophylls, carotenoids and specific lipids..

Its subcellular location is the plastid. The protein resides in the chloroplast thylakoid membrane. Functionally, one of the components of the core complex of photosystem II (PSII). It binds chlorophyll and helps catalyze the primary light-induced photochemical processes of PSII. PSII is a light-driven water:plastoquinone oxidoreductase, using light energy to abstract electrons from H(2)O, generating O(2) and a proton gradient subsequently used for ATP formation. This is Photosystem II CP47 reaction center protein from Euglena gracilis.